We begin with the raw amino-acid sequence, 459 residues long: Putrescine aminotransferase (459 aa).

Pyridoxal 5'-phosphate contacts are provided by residues 150 to 151 (GT) and Gln274. Lys300 is subject to N6-(pyridoxal phosphate)lysine. Residue Thr332 coordinates pyridoxal 5'-phosphate.

This sequence belongs to the class-III pyridoxal-phosphate-dependent aminotransferase family. Putrescine aminotransferase subfamily. The cofactor is pyridoxal 5'-phosphate.

The catalysed reaction is an alkane-alpha,omega-diamine + 2-oxoglutarate = an omega-aminoaldehyde + L-glutamate. The enzyme catalyses putrescine + 2-oxoglutarate = 1-pyrroline + L-glutamate + H2O. It catalyses the reaction cadaverine + 2-oxoglutarate = 5-aminopentanal + L-glutamate. Its pathway is amine and polyamine degradation; putrescine degradation; 4-aminobutanal from putrescine (transaminase route): step 1/1. In terms of biological role, catalyzes the aminotransferase reaction from putrescine to 2-oxoglutarate, leading to glutamate and 4-aminobutanal, which spontaneously cyclizes to form 1-pyrroline. This is the first step in one of two pathways for putrescine degradation, where putrescine is converted into 4-aminobutanoate (gamma-aminobutyrate or GABA) via 4-aminobutanal. Also functions as a cadaverine transaminase in a a L-lysine degradation pathway to succinate that proceeds via cadaverine, glutarate and L-2-hydroxyglutarate. This Escherichia coli O17:K52:H18 (strain UMN026 / ExPEC) protein is Putrescine aminotransferase.